Here is a 1292-residue protein sequence, read N- to C-terminus: (E3-independent) E2 ubiquitin-conjugating enzyme (1292 aa).

A compositionally biased stretch (pro residues) spans 1–37 (MADPAAPTPAAPAPAQAPAPAPEAVPAPAAAPVPAPA). Disordered stretches follow at residues 1-56 (MADP…EAGS) and 85-114 (EDSDSEGEEEGRGSSGCSEAGGAGHEEGRA). Low complexity predominate over residues 38 to 56 (PASDSASGPSSDSGPEAGS). Serine 50, serine 87, serine 89, serine 399, and serine 401 each carry phosphoserine. Disordered stretches follow at residues 401–459 (SPDT…AGEQ), 472–519 (RLHS…IPLS), and 714–746 (IEESDYDSVEGSTSGASSDEWEDDSDSWETDNG). The span at 406 to 427 (CSRDHSMEDPDKKGESKTKSEA) shows a compositional bias: basic and acidic residues. Serine 441 is modified (phosphoserine). Residues 478-490 (QDADDEAADDTDD) are compositionally biased toward acidic residues. Phosphothreonine is present on residues threonine 488 and threonine 491. A compositionally biased stretch (low complexity) spans 491–510 (TSSVTSSASSTTSSQSGSGT). Residues 512 to 536 (RKKSIPLSIKNLKRKHKRKKNKITR) carry the Nuclear localization signal motif. Residue serine 515 is modified to Phosphoserine. Acidic residues predominate over residues 732–742 (DEWEDDSDSWE). Positions 812–882 (RELKEAIKIL…IVEEEKMEAV (71 aa)) form a coiled coil. Position 836 is a phosphoserine (serine 836). Threonine 838 bears the Phosphothreonine mark. A Phosphoserine modification is found at serine 839. A compositionally biased stretch (basic and acidic residues) spans 882–893 (VPDVERKEDKPE). The interval 882 to 903 (VPDVERKEDKPEGQSPVKAEWP) is disordered. Serine 896 carries the post-translational modification Phosphoserine. A UBC core domain is found at 953-1113 (KFFSTVRKEM…ALIRVVQSMT (161 aa)). The Glycyl thioester intermediate role is filled by cysteine 1040. Residues 1160–1248 (NGVPKASSSP…KSYRSFLPEK (89 aa)) form a disordered region.

The protein belongs to the ubiquitin-conjugating enzyme family. Interacts with CPNE1 (via VWFA domain) and CPNE4 (via VWFA domain). Interacts with UBR2. Phosphorylated. Phosphorylation affects subcellular location. Post-translationally, ubiquitinated: autoubiquitinates, possibly affecting its subcellular location. As to expression, predominantly expressed in skeletal muscle and heart.

It is found in the cytoplasm. It localises to the nucleus. It carries out the reaction S-ubiquitinyl-[E1 ubiquitin-activating enzyme]-L-cysteine + [acceptor protein]-L-lysine = [E1 ubiquitin-activating enzyme]-L-cysteine + N(6)-monoubiquitinyl-[acceptor protein]-L-lysine.. It functions in the pathway protein modification; protein ubiquitination. Inhibited by phenylarsine oxide (PAO). Functionally, E2/E3 hybrid ubiquitin-protein ligase that displays both E2 and E3 ligase activities and mediates monoubiquitination of target proteins. Negatively regulates TRAF6-mediated NF-kappa-B activation independently of its E2 activity. Acts as a positive regulator of BMP7 signaling by mediating monoubiquitination of SMAD6, thereby regulating adipogenesis. Mediates monoubiquitination at different sites of the nuclear localization signal (NLS) of BAP1, leading to cytoplasmic retention of BAP1. Also able to monoubiquitinate the NLS of other chromatin-associated proteins, such as INO80 and CXXC1, affecting their subcellular location. Acts as a regulator of retrograde transport by assisting the TRIM27:MAGEL2 E3 ubiquitin ligase complex to mediate 'Lys-63'-linked ubiquitination of WASHC1, leading to promote endosomal F-actin assembly. The sequence is that of (E3-independent) E2 ubiquitin-conjugating enzyme (UBE2O) from Homo sapiens (Human).